Here is a 144-residue protein sequence, read N- to C-terminus: Putative pre-16S rRNA nuclease (144 aa).

This sequence belongs to the YqgF nuclease family.

Its subcellular location is the cytoplasm. In terms of biological role, could be a nuclease involved in processing of the 5'-end of pre-16S rRNA. The sequence is that of Putative pre-16S rRNA nuclease from Mycoplasma mobile (strain ATCC 43663 / 163K / NCTC 11711) (Mesomycoplasma mobile).